Reading from the N-terminus, the 280-residue chain is Chaperone for lacto-N-biosidase (280 aa).

Positions 1–37 (MPRRHRFAAAIAAVAVAAVLLVTLTVAVVTHGDGAFA) are cleaved as a signal peptide.

As to quaternary structure, homodimer.

Its subcellular location is the secreted. Chaperone required for active expression of the lacto-N-biosidase LnbX. This is Chaperone for lacto-N-biosidase from Bifidobacterium longum subsp. longum (strain ATCC 15707 / DSM 20219 / JCM 1217 / NCTC 11818 / E194b).